The primary structure comprises 339 residues: Meiotic recombination protein rec7 (339 aa).

Functionally, may be involved primarily in the early steps of meiotic recombination. The chain is Meiotic recombination protein rec7 (rec7) from Schizosaccharomyces pombe (strain 972 / ATCC 24843) (Fission yeast).